Reading from the N-terminus, the 123-residue chain is UPF0295 protein Bcer98_0460 (123 aa).

Helical transmembrane passes span 12 to 32 (IRTF…LGVF) and 43 to 63 (FMML…WIGM).

The protein belongs to the UPF0295 family.

It localises to the cell membrane. The polypeptide is UPF0295 protein Bcer98_0460 (Bacillus cytotoxicus (strain DSM 22905 / CIP 110041 / 391-98 / NVH 391-98)).